The sequence spans 755 residues: Exocyst complex component 3 (755 aa).

Coiled coils occupy residues aspartate 34–glutamine 62 and arginine 618–phenylalanine 649. Position 38 is an N6-acetyllysine (lysine 38).

It belongs to the SEC6 family. In terms of assembly, the exocyst complex is composed of EXOC1, EXOC2, EXOC3, EXOC4, EXOC5, EXOC6, EXOC7 and EXOC8. Interacts with EXOC3L1. Interacts with BIRC6/bruce. Interacts with MYRIP. Interacts with SLC6A9. In terms of tissue distribution, widely expressed, with highest levels in kidney, followed by brain (at protein level).

The protein resides in the cytoplasm. It localises to the perinuclear region. Its subcellular location is the cell projection. The protein localises to the growth cone. It is found in the neuron projection. The protein resides in the midbody. It localises to the golgi apparatus. In terms of biological role, component of the exocyst complex involved in the docking of exocytic vesicles with fusion sites on the plasma membrane. In Rattus norvegicus (Rat), this protein is Exocyst complex component 3 (Exoc3).